The following is a 320-amino-acid chain: Malate dehydrogenase (320 aa).

NAD(+) is bound by residues 10-15 (GSGMIG) and Asp34. Substrate is bound by residues Arg83 and Arg89. Residues Asn96 and 119–121 (ITN) contribute to the NAD(+) site. Substrate is bound by residues Asn121 and Arg152. The active-site Proton acceptor is the His176.

The protein belongs to the LDH/MDH superfamily. MDH type 3 family.

It carries out the reaction (S)-malate + NAD(+) = oxaloacetate + NADH + H(+). In terms of biological role, catalyzes the reversible oxidation of malate to oxaloacetate. The chain is Malate dehydrogenase from Agrobacterium fabrum (strain C58 / ATCC 33970) (Agrobacterium tumefaciens (strain C58)).